The following is a 636-amino-acid chain: 1-deoxy-D-xylulose-5-phosphate synthase (636 aa).

Thiamine diphosphate contacts are provided by residues His77 and 118 to 120 (GHS). Asp149 contributes to the Mg(2+) binding site. Residues 150-151 (GA), Asn178, Tyr290, and Glu375 each bind thiamine diphosphate. Asn178 is a Mg(2+) binding site.

The protein belongs to the transketolase family. DXPS subfamily. In terms of assembly, homodimer. It depends on Mg(2+) as a cofactor. The cofactor is thiamine diphosphate.

The enzyme catalyses D-glyceraldehyde 3-phosphate + pyruvate + H(+) = 1-deoxy-D-xylulose 5-phosphate + CO2. The protein operates within metabolic intermediate biosynthesis; 1-deoxy-D-xylulose 5-phosphate biosynthesis; 1-deoxy-D-xylulose 5-phosphate from D-glyceraldehyde 3-phosphate and pyruvate: step 1/1. Its function is as follows. Catalyzes the acyloin condensation reaction between C atoms 2 and 3 of pyruvate and glyceraldehyde 3-phosphate to yield 1-deoxy-D-xylulose-5-phosphate (DXP). The chain is 1-deoxy-D-xylulose-5-phosphate synthase from Cytophaga hutchinsonii (strain ATCC 33406 / DSM 1761 / CIP 103989 / NBRC 15051 / NCIMB 9469 / D465).